A 47-amino-acid chain; its full sequence is Defensin Ec-AMP-D1 (47 aa).

Disulfide bonds link cysteine 3/cysteine 47, cysteine 14/cysteine 34, cysteine 20/cysteine 41, and cysteine 24/cysteine 43.

Its function is as follows. Has antifungal activity. Inhibits spore germination in F.graminearum (IC(50)=15 ug/ml), F.oxysporum (IC(50)=102 ug/ml), F.verticillioides (IC(50)=8.5 ug/ml) and D.maydis (IC(50)=12.5 ug/ml), but not in C.graminicola, B.cinerea and H.sativum at concentrations below 30 ug/ml. Inhibits hyphal development in P.infestans (IC(50)=25.5 ug/ml), but not release of zoospores. At concentrations above 100 ug/ml, induces morphological changes such as lysis of hyphae and sporangia in P.infestans. The sequence is that of Defensin Ec-AMP-D1 from Echinochloa crus-galli (Barnyard grass).